We begin with the raw amino-acid sequence, 635 residues long: Sodium- and chloride-dependent transporter XTRP3B (635 aa).

The segment at 1 to 38 (MESPSAHAVSLPEDEELQPWGGAGGPGQHPGRPRSTEC) is disordered. The Cytoplasmic segment spans residues 1–56 (MESPSAHAVSLPEDEELQPWGGAGGPGQHPGRPRSTECAHPGVVEKVRPKWDNPLQ). A helical transmembrane segment spans residues 57 to 77 (FLLVCISYAVGLGNVWRFPYL). At 78–85 (CQMYGGGN) the chain is on the extracellular side. The chain crosses the membrane as a helical span at residues 86 to 106 (FLVPYIIMLIVEGMPLLYLEL). The Cytoplasmic segment spans residues 107-127 (AVGQRMRQGSIGAWRTISPYL). The chain crosses the membrane as a helical span at residues 128–148 (SGVGIASLVVSFLASVYFNVI). The Extracellular portion of the chain corresponds to 149–208 (NTWALWYLFHSFQDPLPWSVCPLNSNHTGYDEECEKASSTQYFWYRKTLNISPSIQENGG). Residue Asn-174 is glycosylated (N-linked (GlcNAc...) asparagine). A helical transmembrane segment spans residues 209–229 (VQWEPALCLTLAWLMVYLCIL). Residues 230–237 (RGTESTGK) lie on the Cytoplasmic side of the membrane. The helical transmembrane segment at 238–258 (VVYFTTSLPYFVLIIYLVRGL) threads the bilayer. Residues 259–284 (TLHGATNGLAYMFTPKIEQLANPKAW) lie on the Extracellular side of the membrane. The helical transmembrane segment at 285-305 (INAATQIFFSLGLGCGGLIAF) threads the bilayer. Topologically, residues 306–319 (ASYNEPSNDCQKHA) are cytoplasmic. The helical transmembrane segment at 320-340 (LIVSVINSTTAIFSSIVTFSI) threads the bilayer. The Extracellular portion of the chain corresponds to 341–432 (YGFKATFNYE…EAIKNMEVSQ (92 aa)). An N-linked (GlcNAc...) asparagine glycan is attached at Asn-400. The helical transmembrane segment at 433 to 453 (LWSVLYFFMLLTLGMGSMVGT) threads the bilayer. Residues 454-474 (GTAILTPLTDSKIISSYLPKE) lie on the Cytoplasmic side of the membrane. Residues 475–495 (AISGLVCLLNCAIGMVFTMEA) form a helical membrane-spanning segment. Topologically, residues 496-508 (GNYWFDLFNDYTA) are extracellular. A helical transmembrane segment spans residues 509–529 (TLSLLLIVLVETIAVCYVYGL). The Cytoplasmic segment spans residues 530–547 (KRFESDLRAMTGRTLSWY). A helical membrane pass occupies residues 548–568 (WKVMWAFVSPLLIVGLFIFYL). Over 569–597 (SDYILTGTLQYQAWDATQGHVVTKDYPTY) the chain is Extracellular. The chain crosses the membrane as a helical span at residues 598–618 (ALAVIGLLVASSTMCIPLVAL). At 619–635 (GTFVTRHFKIREQFSAA) the chain is on the cytoplasmic side.

Belongs to the sodium:neurotransmitter symporter (SNF) (TC 2.A.22) family. SLC6A20 subfamily. In terms of assembly, interacts with CLTRN. As to expression, detected only in kidney and lung.

The protein localises to the apical cell membrane. Does not show transporter activity with a range of tested amino acids including proline, glutamine, glutamic acid, leucine, alanine, histidine, glycine and arginine. The sequence is that of Sodium- and chloride-dependent transporter XTRP3B (Slc6a20b) from Mus musculus (Mouse).